We begin with the raw amino-acid sequence, 444 residues long: Probable D-serine dehydratase (444 aa).

Position 118 is an N6-(pyridoxal phosphate)lysine (lysine 118).

The protein belongs to the serine/threonine dehydratase family. DsdA subfamily. Requires pyridoxal 5'-phosphate as cofactor.

It carries out the reaction D-serine = pyruvate + NH4(+). This chain is Probable D-serine dehydratase, found in Acinetobacter baumannii (strain ACICU).